Reading from the N-terminus, the 61-residue chain is Temporin-1Tb (61 aa).

A signal peptide spans 1-22 (MFTLKKSLLLLFFLGTINLSLC). Positions 23–44 (EEERNAEEERRDEPDERDVQVE) are excised as a propeptide. Leucine amide is present on Leu-59.

It belongs to the frog skin active peptide (FSAP) family. Temporin subfamily. Homo-oligomerizes in membranes as homodimers, homotrimers, or even homotetramers. Oligomerizes in presence of LPS. In Gram-positive bacterial mimetic membranes, the aggregation is weakly pronounced, and penetration proceeds more rapidly and is deeper than in Gram-negative bacterial mimetic membranes where aggregation is high. Homo-oligomerization is prevented by temporin-L. Expressed by the skin glands.

The protein resides in the secreted. The protein localises to the target cell membrane. It localises to the target cell. It is found in the target cell cytoplasm. Functionally, amphipathic alpha-helical antimicrobial peptide with potent activity against Gram-positive bacteria, weak activity against Gram-negative bacteria, and moderate activity against fungi. Mainly acts by causing membrane permeabilization, but is unable to forme pore-like openings. Is also able to penetrate eukaryotic cells (keratinocytes), and kill intracellular S.aureus (both wild-type and MRSA) without injuring host cells. Shows inhibitory effect on biofilm formation of Gram-positive bacteria, but not of Gram-negative bacteria. Shows antiviral activity against herpes simplex virus 1 (HSV-1) by disrupting the viral envelope. Also displays anti-leishmania activity by damaging parasite membrane. Does not show hemolytic activity. Acts synergistically with temporin-L that improves temporin-1Tb activity by preventing its self-association in lipopolysaccharides (LPS). In vitro, promotes cell migration and wound healing. The protein is Temporin-1Tb of Rana temporaria (European common frog).